A 108-amino-acid polypeptide reads, in one-letter code: Urease subunit gamma (108 aa).

The protein belongs to the urease gamma subunit family. In terms of assembly, heterotrimer of UreA (gamma), UreB (beta) and UreC (alpha) subunits. Three heterotrimers associate to form the active enzyme.

The protein resides in the cytoplasm. It carries out the reaction urea + 2 H2O + H(+) = hydrogencarbonate + 2 NH4(+). The protein operates within nitrogen metabolism; urea degradation; CO(2) and NH(3) from urea (urease route): step 1/1. The polypeptide is Urease subunit gamma (Haloquadratum walsbyi (strain DSM 16790 / HBSQ001)).